The chain runs to 170 residues: Large ribosomal subunit protein uL6m (170 aa).

The protein belongs to the universal ribosomal protein uL6 family.

The protein localises to the mitochondrion. In Dictyostelium discoideum (Social amoeba), this protein is Large ribosomal subunit protein uL6m (mrpl6).